The sequence spans 244 residues: Aspartate/glutamate leucyltransferase (244 aa).

This sequence belongs to the R-transferase family. Bpt subfamily.

The protein localises to the cytoplasm. It catalyses the reaction N-terminal L-glutamyl-[protein] + L-leucyl-tRNA(Leu) = N-terminal L-leucyl-L-glutamyl-[protein] + tRNA(Leu) + H(+). The catalysed reaction is N-terminal L-aspartyl-[protein] + L-leucyl-tRNA(Leu) = N-terminal L-leucyl-L-aspartyl-[protein] + tRNA(Leu) + H(+). In terms of biological role, functions in the N-end rule pathway of protein degradation where it conjugates Leu from its aminoacyl-tRNA to the N-termini of proteins containing an N-terminal aspartate or glutamate. This Bordetella bronchiseptica (strain ATCC BAA-588 / NCTC 13252 / RB50) (Alcaligenes bronchisepticus) protein is Aspartate/glutamate leucyltransferase.